The primary structure comprises 592 residues: Arginine--tRNA ligase (592 aa).

Positions 123–133 (PNTNKPLHLGH) match the 'HIGH' region motif.

Belongs to the class-I aminoacyl-tRNA synthetase family. In terms of assembly, monomer.

It is found in the cytoplasm. It catalyses the reaction tRNA(Arg) + L-arginine + ATP = L-arginyl-tRNA(Arg) + AMP + diphosphate. This is Arginine--tRNA ligase from Flavobacterium johnsoniae (strain ATCC 17061 / DSM 2064 / JCM 8514 / BCRC 14874 / CCUG 350202 / NBRC 14942 / NCIMB 11054 / UW101) (Cytophaga johnsonae).